Reading from the N-terminus, the 191-residue chain is Potassium-transporting ATPase KdpC subunit (191 aa).

Residues 10–30 (ITLVFCVFFSVFYILVLWLFA) form a helical membrane-spanning segment.

This sequence belongs to the KdpC family. The system is composed of three essential subunits: KdpA, KdpB and KdpC.

The protein localises to the cell inner membrane. In terms of biological role, part of the high-affinity ATP-driven potassium transport (or Kdp) system, which catalyzes the hydrolysis of ATP coupled with the electrogenic transport of potassium into the cytoplasm. This subunit acts as a catalytic chaperone that increases the ATP-binding affinity of the ATP-hydrolyzing subunit KdpB by the formation of a transient KdpB/KdpC/ATP ternary complex. This chain is Potassium-transporting ATPase KdpC subunit, found in Bacteroides fragilis (strain ATCC 25285 / DSM 2151 / CCUG 4856 / JCM 11019 / LMG 10263 / NCTC 9343 / Onslow / VPI 2553 / EN-2).